Reading from the N-terminus, the 203-residue chain is E3 ubiquitin-protein ligase rnf152-A (203 aa).

The segment at 12–55 (CQICFNYYSPRRRPKLLDCKRTCCSVCLQQMRACQKDLRCPWCR) adopts an RING-type; degenerate zinc-finger fold. Residues 167–187 (SGICTVILVACVLVFLLGIVL) form a helical membrane-spanning segment.

The protein belongs to the RNF152 family.

Its subcellular location is the lysosome membrane. It carries out the reaction S-ubiquitinyl-[E2 ubiquitin-conjugating enzyme]-L-cysteine + [acceptor protein]-L-lysine = [E2 ubiquitin-conjugating enzyme]-L-cysteine + N(6)-ubiquitinyl-[acceptor protein]-L-lysine.. The protein operates within protein modification; protein ubiquitination. E3 ubiquitin-protein ligase that acts as a negative regulator of mTORC1 signaling by mediating ubiquitination of RagA/RRAGA and RHEB. Catalyzes 'Lys-63'-linked polyubiquitination of RagA/RRAGA in response to amino acid starvation, thereby regulating mTORC1 signaling. Also mediates monoubiquitination of RHEB, promoting its association with the TSC-TBC complex and subsequent inhibition. Also mediates 'Lys-48'-linked polyubiquitination of target proteins and their subsequent targeting to the proteasome for degradation. The polypeptide is E3 ubiquitin-protein ligase rnf152-A (Xenopus laevis (African clawed frog)).